A 473-amino-acid chain; its full sequence is Photosystem II CP43 reaction center protein (473 aa).

The propeptide occupies 1–14 (MKTLYSLRRFYPVE). Position 15 is an N-acetylthreonine (Thr-15). At Thr-15 the chain carries Phosphothreonine. 5 consecutive transmembrane segments (helical) span residues 69–93 (LFEV…PHLA), 134–155 (LLGP…KDRN), 178–200 (KALY…RKIT), 255–275 (KPFA…LSYS), and 291–312 (WFNN…ASQA). [CaMn4O5] cluster is bound at residue Glu-367. The helical transmembrane segment at 447 to 471 (RARAAAAGFEKGIDRDFEPVLSMTP) threads the bilayer.

It belongs to the PsbB/PsbC family. PsbC subfamily. As to quaternary structure, PSII is composed of 1 copy each of membrane proteins PsbA, PsbB, PsbC, PsbD, PsbE, PsbF, PsbH, PsbI, PsbJ, PsbK, PsbL, PsbM, PsbT, PsbX, PsbY, PsbZ, Psb30/Ycf12, at least 3 peripheral proteins of the oxygen-evolving complex and a large number of cofactors. It forms dimeric complexes. The cofactor is Binds multiple chlorophylls and provides some of the ligands for the Ca-4Mn-5O cluster of the oxygen-evolving complex. It may also provide a ligand for a Cl- that is required for oxygen evolution. PSII binds additional chlorophylls, carotenoids and specific lipids..

It localises to the plastid. The protein resides in the chloroplast thylakoid membrane. Functionally, one of the components of the core complex of photosystem II (PSII). It binds chlorophyll and helps catalyze the primary light-induced photochemical processes of PSII. PSII is a light-driven water:plastoquinone oxidoreductase, using light energy to abstract electrons from H(2)O, generating O(2) and a proton gradient subsequently used for ATP formation. The chain is Photosystem II CP43 reaction center protein from Drimys granadensis.